We begin with the raw amino-acid sequence, 382 residues long: Glycerate kinase (382 aa).

This sequence belongs to the glycerate kinase type-1 family.

It carries out the reaction (R)-glycerate + ATP = (2R)-3-phosphoglycerate + ADP + H(+). The chain is Glycerate kinase (glxK) from Bacillus subtilis (strain 168).